An 88-amino-acid chain; its full sequence is Acylphosphatase (88 aa).

The 86-residue stretch at 3–88 (AARFVVSGVV…VPPTEDFVTG (86 aa)) folds into the Acylphosphatase-like domain. Residues arginine 18 and asparagine 36 contribute to the active site.

This sequence belongs to the acylphosphatase family.

The catalysed reaction is an acyl phosphate + H2O = a carboxylate + phosphate + H(+). The polypeptide is Acylphosphatase (acyP) (Xanthomonas euvesicatoria pv. vesicatoria (strain 85-10) (Xanthomonas campestris pv. vesicatoria)).